The following is a 504-amino-acid chain: Maturase K (504 aa).

Belongs to the intron maturase 2 family. MatK subfamily.

It is found in the plastid. It localises to the chloroplast. Usually encoded in the trnK tRNA gene intron. Probably assists in splicing its own and other chloroplast group II introns. This chain is Maturase K, found in Actinidia chinensis (Kiwi).